The primary structure comprises 221 residues: Sperm acrosome membrane-associated protein 3 (221 aa).

Over 1 to 69 (MGICMSMYTQ…EARSRAPRRQ (69 aa)) the chain is Cytoplasmic. A helical; Signal-anchor for type II membrane protein membrane pass occupies residues 70 to 90 (LCPPGITWLALAYLLSCLLAS). The Extracellular portion of the chain corresponds to 91 to 221 (SKAKVFSRCE…LSDWVDGCDF (131 aa)). The 128-residue stretch at 94-221 (KVFSRCELAK…LSDWVDGCDF (128 aa)) folds into the C-type lysozyme domain. 4 disulfides stabilise this stretch: Cys99–Cys219, Cys123–Cys207, Cys157–Cys172, and Cys168–Cys186.

This sequence belongs to the glycosyl hydrolase 22 family. Interacts with ASTL. As to expression, the processed form is expressed in sperm (at protein level). Expressed strongly in testis and epididymis and weakly in pancreas.

It is found in the cytoplasmic vesicle. The protein resides in the secretory vesicle. The protein localises to the acrosome membrane. Its subcellular location is the secreted. Functionally, sperm surface membrane protein that may be involved in sperm-egg plasma membrane adhesion and fusion during fertilization. It could be a potential receptor for the egg oligosaccharide residue N-acetylglucosamine, which is present in the extracellular matrix over the egg plasma membrane. The processed form has no detectable bacteriolytic activity in vitro. The polypeptide is Sperm acrosome membrane-associated protein 3 (Spaca3) (Mus musculus (Mouse)).